Here is a 372-residue protein sequence, read N- to C-terminus: MRSVIADSRRLVVKVGSSLVTNDGRGLDHAAIGRWAAQIAALRAQGKEVVLVSSGAIAEGMQRLGWTKRPREIDELQAAAAVGQMGLAQVYESRFAEHSIQTAQILLTHADLADRERYLNARSTLLTLLRLGVVPIINENDTVVTDEIKFGDNDTLGALVANLIEGDALVILTDQQGLFTADPRKDLTATLVQQADAGALELEAMAGGAGSSLGRGGMLTKILAAKRAAHSGANTVIASGREADVLSRLASGEAIGTQLIARTARMAARKQWMADHLQVRGHVVIDDGAVEKLTEGGKSLLPIGIVGVQGAFARGEVIACLSAAGREVARGLTNYSSAETKLIQRRPSGEIESVLGYMLEPELIHRDNLVLV.

Residue Lys-14 coordinates ATP. Substrate is bound by residues Ser-54, Asp-141, and Asn-153. Residue 173-174 (TD) coordinates ATP. The 79-residue stretch at 280-358 (RGHVVIDDGA…GEIESVLGYM (79 aa)) folds into the PUA domain.

Belongs to the glutamate 5-kinase family.

The protein localises to the cytoplasm. The catalysed reaction is L-glutamate + ATP = L-glutamyl 5-phosphate + ADP. It participates in amino-acid biosynthesis; L-proline biosynthesis; L-glutamate 5-semialdehyde from L-glutamate: step 1/2. Catalyzes the transfer of a phosphate group to glutamate to form L-glutamate 5-phosphate. The sequence is that of Glutamate 5-kinase from Paraburkholderia phytofirmans (strain DSM 17436 / LMG 22146 / PsJN) (Burkholderia phytofirmans).